The chain runs to 179 residues: Large ribosomal subunit protein uL5 (179 aa).

The protein belongs to the universal ribosomal protein uL5 family. Part of the 50S ribosomal subunit; part of the 5S rRNA/L5/L18/L25 subcomplex. Contacts the 5S rRNA and the P site tRNA. Forms a bridge to the 30S subunit in the 70S ribosome.

Functionally, this is one of the proteins that bind and probably mediate the attachment of the 5S RNA into the large ribosomal subunit, where it forms part of the central protuberance. In the 70S ribosome it contacts protein S13 of the 30S subunit (bridge B1b), connecting the 2 subunits; this bridge is implicated in subunit movement. Contacts the P site tRNA; the 5S rRNA and some of its associated proteins might help stabilize positioning of ribosome-bound tRNAs. The chain is Large ribosomal subunit protein uL5 from Prochlorococcus marinus (strain MIT 9211).